The primary structure comprises 111 residues: UPF0321 protein P20C8.02c (111 aa).

An N-terminal signal peptide occupies residues 1-17 (MLLLFCICCVFIKLVLA). N-linked (GlcNAc...) asparagine glycosylation is present at Asn-20.

Belongs to the UPF0321 family.

In Schizosaccharomyces pombe (strain 972 / ATCC 24843) (Fission yeast), this protein is UPF0321 protein P20C8.02c.